We begin with the raw amino-acid sequence, 363 residues long: Carbamoyl phosphate synthase small chain (363 aa).

A CPSase region spans residues 1-173; sequence MMKAFLVLDN…SKYIFGTHTG (173 aa). The L-glutamine site is built by serine 46, glycine 225, and glycine 227. Residues 177-363 form the Glutamine amidotransferase type-1 domain; that stretch reads KLAVYDYGVK…YDLVEKTKKG (187 aa). The active-site Nucleophile is cysteine 253. The L-glutamine site is built by leucine 254, glutamine 257, asparagine 295, glycine 297, and phenylalanine 298. Catalysis depends on residues histidine 336 and glutamate 338.

This sequence belongs to the CarA family. As to quaternary structure, composed of two chains; the small (or glutamine) chain promotes the hydrolysis of glutamine to ammonia, which is used by the large (or ammonia) chain to synthesize carbamoyl phosphate. Tetramer of heterodimers (alpha,beta)4.

The enzyme catalyses hydrogencarbonate + L-glutamine + 2 ATP + H2O = carbamoyl phosphate + L-glutamate + 2 ADP + phosphate + 2 H(+). The catalysed reaction is L-glutamine + H2O = L-glutamate + NH4(+). The protein operates within amino-acid biosynthesis; L-arginine biosynthesis; carbamoyl phosphate from bicarbonate: step 1/1. Its pathway is pyrimidine metabolism; UMP biosynthesis via de novo pathway; (S)-dihydroorotate from bicarbonate: step 1/3. In terms of biological role, small subunit of the glutamine-dependent carbamoyl phosphate synthetase (CPSase). CPSase catalyzes the formation of carbamoyl phosphate from the ammonia moiety of glutamine, carbonate, and phosphate donated by ATP, constituting the first step of 2 biosynthetic pathways, one leading to arginine and/or urea and the other to pyrimidine nucleotides. The small subunit (glutamine amidotransferase) binds and cleaves glutamine to supply the large subunit with the substrate ammonia. The sequence is that of Carbamoyl phosphate synthase small chain from Leptospira interrogans serogroup Icterohaemorrhagiae serovar copenhageni (strain Fiocruz L1-130).